The sequence spans 575 residues: Transcription factor E3 (575 aa).

Phosphoserine; by MTOR is present on Ser47. Low complexity predominate over residues 90 to 126 (ATLSASSSAGGSRTPAMSSSSSSRVLLRQQLMRAQAQ). Residues 90–153 (ATLSASSSAG…SPAPASPAIS (64 aa)) form a disordered region. Positions 127–136 (EQERRERREQ) are enriched in basic and acidic residues. At Arg188 the chain carries Asymmetric dimethylarginine. A disordered region spans residues 211–246 (LASQALTPPPGPASAQPLPAPEAAHTTGPTGSAPNS). Residues 260–271 (EIDDVIDEIISL) form a strong transcription activation domain region. At Ser321 the chain carries Phosphoserine; by MTOR. Residue Lys339 forms a Glycyl lysine isopeptide (Lys-Gly) (interchain with G-Cter in SUMO2) linkage. The region spanning 346 to 399 (QKKDNHNLIERRRRFNINDRIKELGTLIPKSSDPEMRWNKGTILKASVDYIRKL) is the bHLH domain. The Nuclear localization signal motif lies at 356-359 (RRRR). A leucine-zipper region spans residues 409 to 430 (LESRQRSLEQANRSLQLRIQEL). Disordered stretches follow at residues 473–498 (GAAT…PPSD) and 534–575 (GGLS…EEES). Positions 539–575 (GALSPLRAASDPLLSSVSPAVSKASSRRSSFSMEEES) are enriched in low complexity. Ser542, Ser548, Ser554, Ser556, Ser560, and Ser568 each carry phosphoserine.

It belongs to the MiT/TFE family. Homodimer and heterodimer; with TFEB or MITF. Interacts with RRAGC/RagC GDP-bound and RRAGD/RagD GDP-bound; promoting its recruitment to lysosomal membrane in the presence of nutrients. Interacts with TSC22D1; the interaction is enhanced in the presence of TGF-beta. Sumoylated; does not affect dimerization with MITF. In terms of processing, phosphorylation ar Ser-47 and Ser-321 by MTOR via non-canonical mTORC1 pathway regulates its stability and subcellular location, respectively. When nutrients are present, phosphorylation by MTOR at Ser-47 promotes ubiquitination by the SCF(BTRC) complex, followed by degradation. When nutrients are present, phosphorylation by MTOR at Ser-321 also promotes association with 14-3-3/YWHA adapters and retention in the cytosol. Phosphorylation at Ser-47 plays a more critical role than phosphorylation at Ser-321 for TFE3 inactivation. Inhibition of mTORC1, starvation and lysosomal disruption, promotes dephosphorylation and transcription factor activity. Post-translationally, ubiquitinated by the SCF(BTRC) and SCF(FBXW11) complexes following phosphorylation at Ser-47 by MTOR, leading to its degradation by the proteasome. As to expression, ubiquitous in fetal and adult tissues.

It localises to the cytoplasm. It is found in the cytosol. Its subcellular location is the nucleus. The protein localises to the lysosome membrane. In terms of biological role, transcription factor that acts as a master regulator of lysosomal biogenesis and immune response. Specifically recognizes and binds E-box sequences (5'-CANNTG-3'); efficient DNA-binding requires dimerization with itself or with another MiT/TFE family member such as TFEB or MITF. Involved in the cellular response to amino acid availability by acting downstream of MTOR: in the presence of nutrients, TFE3 phosphorylation by MTOR promotes its inactivation. Upon starvation or lysosomal stress, inhibition of MTOR induces TFE3 dephosphorylation, resulting in transcription factor activity. Specifically recognizes and binds the CLEAR-box sequence (5'-GTCACGTGAC-3') present in the regulatory region of many lysosomal genes, leading to activate their expression, thereby playing a central role in expression of lysosomal genes. Maintains the pluripotent state of embryonic stem cells by promoting the expression of genes such as ESRRB; mTOR-dependent TFE3 cytosolic retention and inactivation promotes exit from pluripotency. Required to maintain the naive pluripotent state of hematopoietic stem cell; mTOR-dependent cytoplasmic retention of TFE3 promotes the exit of hematopoietic stem cell from pluripotency. TFE3 activity is also involved in the inhibition of neuronal progenitor differentiation. Acts as a positive regulator of browning of adipose tissue by promoting expression of target genes; mTOR-dependent phosphorylation promotes cytoplasmic retention of TFE3 and inhibits browning of adipose tissue. In association with TFEB, activates the expression of CD40L in T-cells, thereby playing a role in T-cell-dependent antibody responses in activated CD4(+) T-cells and thymus-dependent humoral immunity. Specifically recognizes the MUE3 box, a subset of E-boxes, present in the immunoglobulin enhancer. It also binds very well to a USF/MLTF site. Promotes TGF-beta-induced transcription of COL1A2; via its interaction with TSC22D1 at E-boxes in the gene proximal promoter. May regulate lysosomal positioning in response to nutrient deprivation by promoting the expression of PIP4P1. This chain is Transcription factor E3, found in Homo sapiens (Human).